A 286-amino-acid chain; its full sequence is Small ribosomal subunit protein uS3 (286 aa).

The KH type-2 domain occupies 39-107; the sequence is VREYLKKKLA…PVHVNIEEIR (69 aa). The interval 213–286 is disordered; the sequence is QAGAGTAAPQ…KPGVNDAAAS (74 aa). Positions 241–262 are enriched in basic and acidic residues; the sequence is GRADARSDGKAGEKKGPRKSDN.

The protein belongs to the universal ribosomal protein uS3 family. In terms of assembly, part of the 30S ribosomal subunit. Forms a tight complex with proteins S10 and S14.

Its function is as follows. Binds the lower part of the 30S subunit head. Binds mRNA in the 70S ribosome, positioning it for translation. The chain is Small ribosomal subunit protein uS3 from Nitrosospira multiformis (strain ATCC 25196 / NCIMB 11849 / C 71).